The primary structure comprises 137 residues: MLRTMLNGKIHRATVTHADLHYVGSITIDADLMDAANLVDGEQVHVVNITNGHRLVTYVLTGERGSGVIGINGAAARLVAPGDLVIIISYVQLTEAERATHRPHVVHVDANNRIVALGDDLAEPVPGSDQKSGALLP.

Catalysis depends on S25, which acts as the Schiff-base intermediate with substrate; via pyruvic acid. Residue S25 is modified to Pyruvic acid (Ser). A substrate-binding site is contributed by T57. Residue Y58 is the Proton donor of the active site. 73-75 (GAA) is a substrate binding site.

This sequence belongs to the PanD family. Heterooctamer of four alpha and four beta subunits. Pyruvate is required as a cofactor. Is synthesized initially as an inactive proenzyme, which is activated by self-cleavage at a specific serine bond to produce a beta-subunit with a hydroxyl group at its C-terminus and an alpha-subunit with a pyruvoyl group at its N-terminus.

The protein resides in the cytoplasm. It carries out the reaction L-aspartate + H(+) = beta-alanine + CO2. It functions in the pathway cofactor biosynthesis; (R)-pantothenate biosynthesis; beta-alanine from L-aspartate: step 1/1. Functionally, catalyzes the pyruvoyl-dependent decarboxylation of aspartate to produce beta-alanine. This Thermobifida fusca (strain YX) protein is Aspartate 1-decarboxylase.